The sequence spans 267 residues: Heme-containing CO-sensing transcriptional regulator RcoM 1 (267 aa).

In terms of domain architecture, PAS spans 15-86 (RAETFQHKLE…KSRDKLRFLL (72 aa)). Heme-binding residues include His-74 and Met-104. The HTH LytTR-type domain occupies 161-266 (IPVYRKNRVI…TAQLKELLGV (106 aa)).

Requires heme as cofactor.

It localises to the cytoplasm. One-component, b-type heme-containing aerobic sensor and transcriptional regulator that responds to CO by activating the expression of the oxidation operon cox. In Paraburkholderia xenovorans (strain LB400), this protein is Heme-containing CO-sensing transcriptional regulator RcoM 1 (rcoM1).